Consider the following 307-residue polypeptide: Elongation factor Ts (307 aa).

The interval 80-83 (TDFV) is involved in Mg(2+) ion dislocation from EF-Tu.

The protein belongs to the EF-Ts family.

The protein resides in the cytoplasm. Functionally, associates with the EF-Tu.GDP complex and induces the exchange of GDP to GTP. It remains bound to the aminoacyl-tRNA.EF-Tu.GTP complex up to the GTP hydrolysis stage on the ribosome. This Xanthobacter autotrophicus (strain ATCC BAA-1158 / Py2) protein is Elongation factor Ts.